Reading from the N-terminus, the 122-residue chain is Ribonuclease pancreatic (122 aa).

Residues 1 to 16 (ETPAEKFQRQHMDTEH) are compositionally biased toward basic and acidic residues. The interval 1–20 (ETPAEKFQRQHMDTEHSTAS) is disordered. Residues Lys-6 and Arg-9 each contribute to the substrate site. His-11 acts as the Proton acceptor in catalysis. 4 disulfides stabilise this stretch: Cys-25–Cys-83, Cys-39–Cys-94, Cys-57–Cys-109, and Cys-64–Cys-71. Residues 40–44 (KPLNT), Lys-65, and Arg-84 contribute to the substrate site. Catalysis depends on His-117, which acts as the Proton donor.

The protein belongs to the pancreatic ribonuclease family. As to quaternary structure, monomer. Interacts with and forms tight 1:1 complexes with RNH1. Dimerization of two such complexes may occur. Interaction with RNH1 inhibits this protein. Not glycosylated although the sequence N-V-T, a recognition site for carbohydrate attachment, is present. As to expression, pancreas.

It is found in the secreted. It catalyses the reaction an [RNA] containing cytidine + H2O = an [RNA]-3'-cytidine-3'-phosphate + a 5'-hydroxy-ribonucleotide-3'-[RNA].. It carries out the reaction an [RNA] containing uridine + H2O = an [RNA]-3'-uridine-3'-phosphate + a 5'-hydroxy-ribonucleotide-3'-[RNA].. In terms of biological role, endonuclease that catalyzes the cleavage of RNA on the 3' side of pyrimidine nucleotides. Acts on single-stranded and double-stranded RNA. The polypeptide is Ribonuclease pancreatic (RNASE1) (Osphranter rufus (Red kangaroo)).